We begin with the raw amino-acid sequence, 291 residues long: Diaminopimelate epimerase (291 aa).

Residues asparagine 11 and asparagine 78 each coordinate substrate. The Proton donor role is filled by cysteine 87. Residues glycine 88 to asparagine 89, asparagine 166, asparagine 200, and glutamate 218 to arginine 219 contribute to the substrate site. Cysteine 227 serves as the catalytic Proton acceptor. Substrate is bound at residue glycine 228–threonine 229.

It belongs to the diaminopimelate epimerase family. As to quaternary structure, homodimer.

The protein resides in the cytoplasm. The enzyme catalyses (2S,6S)-2,6-diaminopimelate = meso-2,6-diaminopimelate. It participates in amino-acid biosynthesis; L-lysine biosynthesis via DAP pathway; DL-2,6-diaminopimelate from LL-2,6-diaminopimelate: step 1/1. In terms of biological role, catalyzes the stereoinversion of LL-2,6-diaminopimelate (L,L-DAP) to meso-diaminopimelate (meso-DAP), a precursor of L-lysine and an essential component of the bacterial peptidoglycan. The polypeptide is Diaminopimelate epimerase (Mycolicibacterium smegmatis (strain ATCC 700084 / mc(2)155) (Mycobacterium smegmatis)).